We begin with the raw amino-acid sequence, 189 residues long: MAQGHTTASAILHNFRELIKEPKGLDDAANYLFQGLLDDVVAGIFIEIHHLRKTGNLTALDGVGEENAESAYRICEMPNLDIFGISTAKKPMDCTCPNCDRLVAATRFAPHLEKCMGMGRISSRIASRRLATKEGSSASSTSTSTYLQSGNTGGTDDEDDVDWSSDKRKKKSTQNSRNNGSKKNNGKTF.

An SGF11-type zinc finger spans residues 94–115 (CTCPNCDRLVAATRFAPHLEKC). The tract at residues 128-189 (RRLATKEGSS…GSKKNNGKTF (62 aa)) is disordered. Residues 136 to 145 (SSASSTSTST) show a composition bias toward low complexity. Ser-165 carries the post-translational modification Phosphoserine. A compositionally biased stretch (low complexity) spans 175–189 (NSRNNGSKKNNGKTF).

The protein belongs to the SGF11 family. Component of some SAGA transcription coactivator-HAT complexes, at least composed of Ada2b, not/nonstop, Pcaf/Gcn5, Sgf11 and Spt3. Within the SAGA complex, Sgf11, e(y)2, and not/nonstop form an additional subcomplex of SAGA called the DUB module (deubiquitination module). Interacts directly with not/nonstop. Interacts with the AMEX complex component xmas-2. Interacts with Cbp80; important for promoter recruitment of Sgf11 that is not associated with the DUB module.

The protein localises to the nucleus. It localises to the nucleoplasm. It is found in the cytoplasm. Its function is as follows. Component of the transcription regulatory histone acetylation (HAT) complex SAGA, a multiprotein complex that activates transcription by remodeling chromatin and mediating histone acetylation and deubiquitination. Within the SAGA complex, participates in a subcomplex that specifically deubiquitinates histone H2B. The SAGA complex is recruited to specific gene promoters by activators, where it is required for transcription. Required for nuclear receptor-mediated transactivation. Binds independently on SAGA to promoters in an RNA-dependent manner. Binds to mRNA and is essential for total mRNA export from the nucleus. Required to counteract heterochromatin silencing. Controls the development of neuronal connectivity in visual system by being required for accurate axon targeting in the optic lobe. Required for expression of ecdysone-induced genes such as br/broad. In Drosophila virilis (Fruit fly), this protein is SAGA-associated factor 11 homolog.